Consider the following 89-residue polypeptide: Phosphocarrier protein HPr (89 aa).

One can recognise an HPr domain in the interval 1-88 (MLEHELTVTN…ELFENRFNED (88 aa)). The active-site Pros-phosphohistidine intermediate is the histidine 15. Residue serine 46 is modified to Phosphoserine; by HPrK/P.

The protein belongs to the HPr family.

It localises to the cytoplasm. With respect to regulation, phosphorylation on Ser-46 inhibits the phosphoryl transfer from enzyme I to HPr. General (non sugar-specific) component of the phosphoenolpyruvate-dependent sugar phosphotransferase system (sugar PTS). This major carbohydrate active-transport system catalyzes the phosphorylation of incoming sugar substrates concomitantly with their translocation across the cell membrane. The phosphoryl group from phosphoenolpyruvate (PEP) is transferred to the phosphoryl carrier protein HPr by enzyme I. Phospho-HPr then transfers it to the PTS EIIA domain. The sequence is that of Phosphocarrier protein HPr (ptsH) from Xylella fastidiosa (strain Temecula1 / ATCC 700964).